We begin with the raw amino-acid sequence, 155 residues long: NADPH-dependent 7-cyano-7-deazaguanine reductase (155 aa).

The active-site Thioimide intermediate is cysteine 53. The Proton donor role is filled by aspartate 60. Substrate is bound by residues 75 to 77 and 94 to 95; these read VES and HE.

The protein belongs to the GTP cyclohydrolase I family. QueF type 1 subfamily.

The protein localises to the cytoplasm. The catalysed reaction is 7-aminomethyl-7-carbaguanine + 2 NADP(+) = 7-cyano-7-deazaguanine + 2 NADPH + 3 H(+). It functions in the pathway tRNA modification; tRNA-queuosine biosynthesis. Its function is as follows. Catalyzes the NADPH-dependent reduction of 7-cyano-7-deazaguanine (preQ0) to 7-aminomethyl-7-deazaguanine (preQ1). This is NADPH-dependent 7-cyano-7-deazaguanine reductase from Brucella suis (strain ATCC 23445 / NCTC 10510).